Reading from the N-terminus, the 473-residue chain is Zinc finger and SCAN domain-containing protein 21 (473 aa).

Residue lysine 27 forms a Glycyl lysine isopeptide (Lys-Gly) (interchain with G-Cter in SUMO2) linkage. The SCAN box domain occupies 45-127 (RQRFRQFGYH…TLLEDLEREL (83 aa)). Positions 127-167 (LDEPGHQVSTPPNEQKPVWEKISSSGTAKESPSSMQPQPLE) are disordered. The span at 148–165 (ISSSGTAKESPSSMQPQP) shows a compositional bias: polar residues. Glycyl lysine isopeptide (Lys-Gly) (interchain with G-Cter in SUMO2) cross-links involve residues lysine 221 and lysine 232. Residues 244–272 (LENEKGTKPPLQEAGSKKGRESVPTKPTP) are disordered. Basic and acidic residues predominate over residues 258–272 (GSKKGRESVPTKPTP). 7 consecutive C2H2-type zinc fingers follow at residues 277–299 (YICAECGKAFSNSSNLTKHRRTH), 305–327 (YVCTKCGKAFSHSSNLTLHYRTH), 333–354 (YDCKCGKAFGQSSDLLKHQRMH), 360–382 (YQCKDCGKAFSGKGSLIRHYRIH), 388–410 (YQCNECGKSFSQHAGLSSHQRLH), 416–438 (YKCKECGKAFNHSSNFNKHHRIH), and 444–466 (YWCHHCGKTFCSKSNLSKHQRVH). Lysine 349 participates in a covalent cross-link: Glycyl lysine isopeptide (Lys-Gly) (interchain with G-Cter in SUMO2).

This sequence belongs to the krueppel C2H2-type zinc-finger protein family.

It is found in the nucleus. Its function is as follows. Strong transcriptional activator. Plays an important role in spermatogenesis; essential for the progression of meiotic prophase I in spermatocytes. The protein is Zinc finger and SCAN domain-containing protein 21 (ZSCAN21) of Pan troglodytes (Chimpanzee).